We begin with the raw amino-acid sequence, 294 residues long: 4-hydroxy-tetrahydrodipicolinate synthase (294 aa).

Threonine 45 is a binding site for pyruvate. Tyrosine 133 serves as the catalytic Proton donor/acceptor. The active-site Schiff-base intermediate with substrate is the lysine 162. Valine 204 is a pyruvate binding site.

Belongs to the DapA family. In terms of assembly, homotetramer; dimer of dimers.

The protein resides in the cytoplasm. It carries out the reaction L-aspartate 4-semialdehyde + pyruvate = (2S,4S)-4-hydroxy-2,3,4,5-tetrahydrodipicolinate + H2O + H(+). It functions in the pathway amino-acid biosynthesis; L-lysine biosynthesis via DAP pathway; (S)-tetrahydrodipicolinate from L-aspartate: step 3/4. Its function is as follows. Catalyzes the condensation of (S)-aspartate-beta-semialdehyde [(S)-ASA] and pyruvate to 4-hydroxy-tetrahydrodipicolinate (HTPA). The sequence is that of 4-hydroxy-tetrahydrodipicolinate synthase from Bartonella bacilliformis (strain ATCC 35685 / KC583 / Herrer 020/F12,63).